The primary structure comprises 31 residues: Cytochrome b6-f complex subunit 6 (31 aa).

Residues 4–24 (LLSYFAFLMLALTFTLALFVG) traverse the membrane as a helical segment.

The protein belongs to the PetL family. As to quaternary structure, the 4 large subunits of the cytochrome b6-f complex are cytochrome b6, subunit IV (17 kDa polypeptide, PetD), cytochrome f and the Rieske protein, while the 4 small subunits are PetG, PetL, PetM and PetN. The complex functions as a dimer.

The protein localises to the plastid. Its subcellular location is the chloroplast thylakoid membrane. Its function is as follows. Component of the cytochrome b6-f complex, which mediates electron transfer between photosystem II (PSII) and photosystem I (PSI), cyclic electron flow around PSI, and state transitions. PetL is important for photoautotrophic growth as well as for electron transfer efficiency and stability of the cytochrome b6-f complex. This Adiantum capillus-veneris (Maidenhair fern) protein is Cytochrome b6-f complex subunit 6.